Consider the following 581-residue polypeptide: Lipoprotein LpqB (581 aa).

A signal peptide spans 1–23 (MRNHVSRYLTALIAVGCAATTAA). C24 carries N-palmitoyl cysteine lipidation. C24 carries S-diacylglycerol cysteine lipidation.

The protein belongs to the LpqB lipoprotein family.

It localises to the cell membrane. This is Lipoprotein LpqB from Corynebacterium diphtheriae (strain ATCC 700971 / NCTC 13129 / Biotype gravis).